We begin with the raw amino-acid sequence, 99 residues long: A-type ATP synthase subunit F (99 aa).

The protein belongs to the V-ATPase F subunit family. In terms of assembly, has multiple subunits with at least A(3), B(3), C, D, E, F, H, I and proteolipid K(x).

It localises to the cell membrane. Its function is as follows. Component of the A-type ATP synthase that produces ATP from ADP in the presence of a proton gradient across the membrane. The polypeptide is A-type ATP synthase subunit F (Methanococcus vannielii (strain ATCC 35089 / DSM 1224 / JCM 13029 / OCM 148 / SB)).